Reading from the N-terminus, the 569-residue chain is Urease subunit alpha (569 aa).

Residues 131-569 (GGFDSHIHFI…LPMAQRYFLF (439 aa)) form the Urease domain. Positions 136, 138, and 219 each coordinate Ni(2+). Lys219 carries the N6-carboxylysine modification. His221 contributes to the substrate binding site. Residues His248 and His274 each contribute to the Ni(2+) site. His322 serves as the catalytic Proton donor. Asp362 contributes to the Ni(2+) binding site.

Belongs to the metallo-dependent hydrolases superfamily. Urease alpha subunit family. In terms of assembly, heterotrimer of UreA (gamma), UreB (beta) and UreC (alpha) subunits. Three heterotrimers associate to form the active enzyme. Ni cation is required as a cofactor. In terms of processing, carboxylation allows a single lysine to coordinate two nickel ions.

The protein localises to the cytoplasm. It carries out the reaction urea + 2 H2O + H(+) = hydrogencarbonate + 2 NH4(+). It functions in the pathway nitrogen metabolism; urea degradation; CO(2) and NH(3) from urea (urease route): step 1/1. This Ruegeria pomeroyi (strain ATCC 700808 / DSM 15171 / DSS-3) (Silicibacter pomeroyi) protein is Urease subunit alpha.